Consider the following 401-residue polypeptide: Probable N-acetyl-gamma-glutamyl-phosphate reductase, chloroplastic (401 aa).

The N-terminal 48 residues, 1–48 (MSTASAFSSIQGCWFKGERKIRVADKRAKRLTLGSHVASPSSMSFRVS), are a transit peptide targeting the chloroplast. C205 is an active-site residue.

It belongs to the NAGSA dehydrogenase family. Type 1 subfamily. Homotetramer.

The protein localises to the plastid. It is found in the chloroplast. The catalysed reaction is N-acetyl-L-glutamate 5-semialdehyde + phosphate + NADP(+) = N-acetyl-L-glutamyl 5-phosphate + NADPH + H(+). It participates in amino-acid biosynthesis; L-arginine biosynthesis; N(2)-acetyl-L-ornithine from L-glutamate: step 3/4. The chain is Probable N-acetyl-gamma-glutamyl-phosphate reductase, chloroplastic from Arabidopsis thaliana (Mouse-ear cress).